The sequence spans 100 residues: Acylphosphatase (100 aa).

Residues R14–R100 enclose the Acylphosphatase-like domain. Residues R29 and N47 contribute to the active site.

It belongs to the acylphosphatase family.

It carries out the reaction an acyl phosphate + H2O = a carboxylate + phosphate + H(+). In Nocardia farcinica (strain IFM 10152), this protein is Acylphosphatase (acyP).